A 403-amino-acid polypeptide reads, in one-letter code: Decapping and exoribonuclease protein 1 (403 aa).

Glu223 is an a divalent metal cation binding site. Glu260 contacts substrate. Residues Asp262, Glu273, and Ile274 each coordinate a divalent metal cation. Substrate contacts are provided by Lys275 and Gln297.

This sequence belongs to the DXO/Dom3Z family. It depends on a divalent metal cation as a cofactor.

The protein resides in the cytoplasm. The catalysed reaction is a 5'-end NAD(+)-phospho-ribonucleoside in mRNA + H2O = a 5'-end phospho-ribonucleoside in mRNA + NAD(+) + H(+). It catalyses the reaction a 5'-end (N(7)-methyl 5'-triphosphoguanosine)-ribonucleoside-ribonucleotide in mRNA + H2O = a (N(7)-methyl 5'-triphosphoguanosine)-nucleoside + a 5'-end phospho-ribonucleoside in mRNA + H(+). Its function is as follows. Decapping enzyme for NAD-capped RNAs: specifically hydrolyzes the nicotinamide adenine dinucleotide (NAD) cap from a subset of RNAs by removing the entire NAD moiety from the 5'-end of an NAD-capped RNA. The NAD-cap is present at the 5'-end of some RNAs and snoRNAs. In contrast to the canonical 5'-end N7 methylguanosine (m7G) cap, the NAD cap promotes mRNA decay. Also acts as a non-canonical decapping enzyme that removes the entire cap structure of m7G capped or incompletely capped RNAs and mediates their subsequent degradation. Has decapping and 5'-3' exonuclease activities. Has decapping activity toward incomplete 5'-end cap mRNAs such as unmethylated 5'-end-capped RNA to release GpppN and 5'-end monophosphate RNA. The 5'-end monophosphate RNA is then degraded by the 5'-3' exoribonuclease activity, enabling this enzyme to decap and degrade incompletely capped mRNAs. In Kluyveromyces lactis (strain ATCC 8585 / CBS 2359 / DSM 70799 / NBRC 1267 / NRRL Y-1140 / WM37) (Yeast), this protein is Decapping and exoribonuclease protein 1.